A 407-amino-acid chain; its full sequence is Arginine biosynthesis bifunctional protein ArgJ (407 aa).

T157, K183, T194, E280, N402, and T407 together coordinate substrate. T194 serves as the catalytic Nucleophile.

It belongs to the ArgJ family. Heterotetramer of two alpha and two beta chains.

It is found in the cytoplasm. The enzyme catalyses N(2)-acetyl-L-ornithine + L-glutamate = N-acetyl-L-glutamate + L-ornithine. The catalysed reaction is L-glutamate + acetyl-CoA = N-acetyl-L-glutamate + CoA + H(+). It functions in the pathway amino-acid biosynthesis; L-arginine biosynthesis; L-ornithine and N-acetyl-L-glutamate from L-glutamate and N(2)-acetyl-L-ornithine (cyclic): step 1/1. The protein operates within amino-acid biosynthesis; L-arginine biosynthesis; N(2)-acetyl-L-ornithine from L-glutamate: step 1/4. Its function is as follows. Catalyzes two activities which are involved in the cyclic version of arginine biosynthesis: the synthesis of N-acetylglutamate from glutamate and acetyl-CoA as the acetyl donor, and of ornithine by transacetylation between N(2)-acetylornithine and glutamate. The protein is Arginine biosynthesis bifunctional protein ArgJ of Bacillus cereus (strain ATCC 10987 / NRS 248).